The following is a 548-amino-acid chain: Esterase-5A (548 aa).

An N-terminal signal peptide occupies residues 1 to 19 (MHLVRWLICLIQLWIQLGA). Cys-87 and Cys-106 form a disulfide bridge. 2 N-linked (GlcNAc...) asparagine glycosylation sites follow: Asn-95 and Asn-116. Catalysis depends on Ser-210, which acts as the Acyl-ester intermediate. A disulfide bond links Cys-262 and Cys-274. N-linked (GlcNAc...) asparagine glycosylation occurs at Asn-479. A disulfide bridge connects residues Cys-518 and Cys-539.

Belongs to the type-B carboxylesterase/lipase family.

The protein resides in the secreted. It carries out the reaction a carboxylic ester + H2O = an alcohol + a carboxylate + H(+). The sequence is that of Esterase-5A (Est-5A) from Drosophila persimilis (Fruit fly).